The chain runs to 281 residues: Bifunctional protein FolD (281 aa).

Residues glycine 167–serine 169 and serine 192 contribute to the NADP(+) site.

This sequence belongs to the tetrahydrofolate dehydrogenase/cyclohydrolase family. As to quaternary structure, homodimer.

The enzyme catalyses (6R)-5,10-methylene-5,6,7,8-tetrahydrofolate + NADP(+) = (6R)-5,10-methenyltetrahydrofolate + NADPH. The catalysed reaction is (6R)-5,10-methenyltetrahydrofolate + H2O = (6R)-10-formyltetrahydrofolate + H(+). It participates in one-carbon metabolism; tetrahydrofolate interconversion. Catalyzes the oxidation of 5,10-methylenetetrahydrofolate to 5,10-methenyltetrahydrofolate and then the hydrolysis of 5,10-methenyltetrahydrofolate to 10-formyltetrahydrofolate. The chain is Bifunctional protein FolD from Alcanivorax borkumensis (strain ATCC 700651 / DSM 11573 / NCIMB 13689 / SK2).